A 111-amino-acid chain; its full sequence is Probable 4-amino-4-deoxy-L-arabinose-phosphoundecaprenol flippase subunit ArnE (111 aa).

The next 3 membrane-spanning stretches (helical) occupy residues 38–58 (LWLGLALICMGAAMVLWLLVL), 61–81 (LPVGIAYPMLSLNFVWVTLAA), and 91–111 (PRHWLGVALIISGIIILGSAA). Positions 40–109 (LGLALICMGA…IISGIIILGS (70 aa)) constitute an EamA domain.

This sequence belongs to the ArnE family. Heterodimer of ArnE and ArnF.

It is found in the cell inner membrane. Its pathway is bacterial outer membrane biogenesis; lipopolysaccharide biosynthesis. In terms of biological role, translocates 4-amino-4-deoxy-L-arabinose-phosphoundecaprenol (alpha-L-Ara4N-phosphoundecaprenol) from the cytoplasmic to the periplasmic side of the inner membrane. The sequence is that of Probable 4-amino-4-deoxy-L-arabinose-phosphoundecaprenol flippase subunit ArnE from Salmonella choleraesuis (strain SC-B67).